The primary structure comprises 707 residues: Alpha-hemolysin translocation ATP-binding protein HlyB (707 aa).

The region spanning 3 to 125 is the Peptidase C39 domain; the sequence is SCHKIDYGLY…ALYQGHIILI (123 aa). The active site involves His-83. The region spanning 154 to 436 is the ABC transmembrane type-1 domain; it reads FIETLVVSVF…LAQIWQDFQQ (283 aa). Transmembrane regions (helical) follow at residues 158 to 178, 191 to 211, 269 to 289, 295 to 315, and 388 to 408; these read LVVS…FQVV, LNVI…LSGL, ALTS…MWYY, LVIL…SPIL, and VMII…LSIG. The region spanning 468–703 is the ABC transporter domain; it reads ITFRNIRFRY…PESLYSYLYQ (236 aa). 502–509 serves as a coordination point for ATP; that stretch reads GRSGSGKS.

Belongs to the ABC transporter superfamily. Protein-1 exporter (TC 3.A.1.109) family. In terms of assembly, homodimer.

It is found in the cell inner membrane. In terms of biological role, part of the ABC transporter complex HlyBD involved in hemolysin export. Transmembrane domains (TMD) form a pore in the inner membrane and the ATP-binding domain (NBD) is responsible for energy generation. The sequence is that of Alpha-hemolysin translocation ATP-binding protein HlyB (hlyB) from Escherichia coli.